The sequence spans 309 residues: ATP synthase gamma chain (309 aa).

Belongs to the ATPase gamma chain family. In terms of assembly, F-type ATPases have 2 components, CF(1) - the catalytic core - and CF(0) - the membrane proton channel. CF(1) has five subunits: alpha(3), beta(3), gamma(1), delta(1), epsilon(1). CF(0) has three main subunits: a, b and c.

The protein resides in the cell membrane. Produces ATP from ADP in the presence of a proton gradient across the membrane. The gamma chain is believed to be important in regulating ATPase activity and the flow of protons through the CF(0) complex. This is ATP synthase gamma chain from Ligilactobacillus salivarius (strain UCC118) (Lactobacillus salivarius).